The primary structure comprises 353 residues: Photosystem II protein D1 (353 aa).

An N-acetylthreonine modification is found at Thr2. Thr2 carries the phosphothreonine modification. 3 consecutive transmembrane segments (helical) span residues 29–46, 118–133, and 142–156; these read YIGW…TATS, HFLL…EWEL, and WIAV…AATA. His118 lines the chlorophyll a pocket. Position 126 (Tyr126) interacts with pheophytin a. [CaMn4O5] cluster-binding residues include Asp170 and Glu189. Residues 197–218 traverse the membrane as a helical segment; that stretch reads FHMLGVAGVFGGSLFSAMHGSL. His198 serves as a coordination point for chlorophyll a. Residues His215 and 264 to 265 contribute to the a quinone site; that span reads SF. A Fe cation-binding site is contributed by His215. His272 serves as a coordination point for Fe cation. The chain crosses the membrane as a helical span at residues 274–288; that stretch reads FLAAWPVVGIWFTAL. The [CaMn4O5] cluster site is built by His332, Glu333, and Ala344. A propeptide spanning residues 345–353 is cleaved from the precursor; it reads AIEAPAVNG.

It belongs to the reaction center PufL/M/PsbA/D family. As to quaternary structure, PSII is composed of 1 copy each of membrane proteins PsbA, PsbB, PsbC, PsbD, PsbE, PsbF, PsbH, PsbI, PsbJ, PsbK, PsbL, PsbM, PsbT, PsbX, PsbY, PsbZ, Psb30/Ycf12, at least 3 peripheral proteins of the oxygen-evolving complex and a large number of cofactors. It forms dimeric complexes. It depends on The D1/D2 heterodimer binds P680, chlorophylls that are the primary electron donor of PSII, and subsequent electron acceptors. It shares a non-heme iron and each subunit binds pheophytin, quinone, additional chlorophylls, carotenoids and lipids. D1 provides most of the ligands for the Mn4-Ca-O5 cluster of the oxygen-evolving complex (OEC). There is also a Cl(-1) ion associated with D1 and D2, which is required for oxygen evolution. The PSII complex binds additional chlorophylls, carotenoids and specific lipids. as a cofactor. Post-translationally, tyr-161 forms a radical intermediate that is referred to as redox-active TyrZ, YZ or Y-Z. In terms of processing, C-terminally processed by CTPA; processing is essential to allow assembly of the oxygen-evolving complex and thus photosynthetic growth.

The protein resides in the plastid. Its subcellular location is the chloroplast thylakoid membrane. It carries out the reaction 2 a plastoquinone + 4 hnu + 2 H2O = 2 a plastoquinol + O2. Functionally, photosystem II (PSII) is a light-driven water:plastoquinone oxidoreductase that uses light energy to abstract electrons from H(2)O, generating O(2) and a proton gradient subsequently used for ATP formation. It consists of a core antenna complex that captures photons, and an electron transfer chain that converts photonic excitation into a charge separation. The D1/D2 (PsbA/PsbD) reaction center heterodimer binds P680, the primary electron donor of PSII as well as several subsequent electron acceptors. The protein is Photosystem II protein D1 of Conocephalum japonicum (Liverwort).